A 436-amino-acid polypeptide reads, in one-letter code: Glutamyl-tRNA reductase (436 aa).

Residues 49 to 52 (TCNR), Ser109, 114 to 116 (EGQ), and Gln120 contribute to the substrate site. The active-site Nucleophile is the Cys50. 198 to 203 (GAGRMS) is an NADP(+) binding site.

It belongs to the glutamyl-tRNA reductase family. In terms of assembly, homodimer.

It catalyses the reaction (S)-4-amino-5-oxopentanoate + tRNA(Glu) + NADP(+) = L-glutamyl-tRNA(Glu) + NADPH + H(+). It participates in porphyrin-containing compound metabolism; protoporphyrin-IX biosynthesis; 5-aminolevulinate from L-glutamyl-tRNA(Glu): step 1/2. The protein operates within porphyrin-containing compound metabolism; chlorophyll biosynthesis. In terms of biological role, catalyzes the NADPH-dependent reduction of glutamyl-tRNA(Glu) to glutamate 1-semialdehyde (GSA). The polypeptide is Glutamyl-tRNA reductase (Prochlorococcus marinus (strain MIT 9215)).